We begin with the raw amino-acid sequence, 126 residues long: Profilin (126 aa).

It belongs to the profilin family. As to quaternary structure, occurs in many kinds of cells as a complex with monomeric actin in a 1:1 ratio.

Its subcellular location is the cytoplasm. It localises to the cytoskeleton. Binds to actin and affects the structure of the cytoskeleton. At high concentrations, profilin prevents the polymerization of actin, whereas it enhances it at low concentrations. By binding to PIP2, it inhibits the formation of IP3 and DG. The protein is Profilin (PFY1) of Saccharomyces cerevisiae (strain ATCC 204508 / S288c) (Baker's yeast).